Reading from the N-terminus, the 572-residue chain is Proline--tRNA ligase (572 aa).

Belongs to the class-II aminoacyl-tRNA synthetase family. ProS type 1 subfamily. As to quaternary structure, homodimer.

The protein localises to the cytoplasm. It carries out the reaction tRNA(Pro) + L-proline + ATP = L-prolyl-tRNA(Pro) + AMP + diphosphate. Catalyzes the attachment of proline to tRNA(Pro) in a two-step reaction: proline is first activated by ATP to form Pro-AMP and then transferred to the acceptor end of tRNA(Pro). As ProRS can inadvertently accommodate and process non-cognate amino acids such as alanine and cysteine, to avoid such errors it has two additional distinct editing activities against alanine. One activity is designated as 'pretransfer' editing and involves the tRNA(Pro)-independent hydrolysis of activated Ala-AMP. The other activity is designated 'posttransfer' editing and involves deacylation of mischarged Ala-tRNA(Pro). The misacylated Cys-tRNA(Pro) is not edited by ProRS. The protein is Proline--tRNA ligase of Caldicellulosiruptor saccharolyticus (strain ATCC 43494 / DSM 8903 / Tp8T 6331).